We begin with the raw amino-acid sequence, 209 residues long: 2,3-bisphosphoglycerate-dependent phosphoglycerate mutase (209 aa).

Substrate-binding positions include 8–15 (RHGQSEGN), 21–22 (TG), arginine 60, 87–90 (ERDY), lysine 98, 114–115 (RR), and 158–159 (GN). Histidine 9 functions as the Tele-phosphohistidine intermediate in the catalytic mechanism. Glutamate 87 acts as the Proton donor/acceptor in catalysis.

Belongs to the phosphoglycerate mutase family. BPG-dependent PGAM subfamily. As to quaternary structure, homodimer.

The catalysed reaction is (2R)-2-phosphoglycerate = (2R)-3-phosphoglycerate. It participates in carbohydrate degradation; glycolysis; pyruvate from D-glyceraldehyde 3-phosphate: step 3/5. In terms of biological role, catalyzes the interconversion of 2-phosphoglycerate and 3-phosphoglycerate. This Rhizobium etli (strain ATCC 51251 / DSM 11541 / JCM 21823 / NBRC 15573 / CFN 42) protein is 2,3-bisphosphoglycerate-dependent phosphoglycerate mutase.